We begin with the raw amino-acid sequence, 523 residues long: Probable endopeptidase p60 (523 aa).

The signal sequence occupies residues 1-27 (MNMKKATIAATAGIAVTAFAAPTIASA). One can recognise a LysM 1 domain in the interval 28–71 (STVVVEAGDTLWGIAQDNGTTVDALKKANKLTTDKIVPGQKLQV). The 65-residue stretch at 78 to 142 (KTEKSVSATW…VNGKYLGNAV (65 aa)) folds into the SH3b domain. A disordered region spans residues 146–188 (PSATPEVKQEETTQAAPAQQTKTEVKQATPAATTEKDAVETKT). Low complexity predominate over residues 157–167 (TTQAAPAQQTK). One can recognise a LysM 2 domain in the interval 198–241 (TTHTVKSGDTIWALSVKYGASVQDLMSWNNLSSSSIYVGQNIAV). Composition is skewed to low complexity over residues 251–282 (PKAE…TTTT) and 290–318 (EKQT…TNAS). Disordered regions lie at residues 251–323 (PKAE…YTVK) and 367–408 (ATNT…SSSA). A LysM 3 domain is found at 318–361 (SSYTVKSGDTLGKIASTFGTTVSKIKALNGLTSDNLQVGDVLKV). The NlpC/P60 domain maps to 405-523 (SSSASAIIAE…GQYLVGFGRV (119 aa)). Cys-435 functions as the Nucleophile in the catalytic mechanism. Catalysis depends on His-485, which acts as the Proton acceptor. The active site involves Asn-497.

The protein belongs to the peptidase C40 family.

Its function is as follows. This major extracellular protein may be involved in the invasion of non-professional phagocytic cells by Listeria. The sequence is that of Probable endopeptidase p60 (iap) from Listeria seeligeri.